The sequence spans 496 residues: Fibronectin type III and SPRY domain-containing protein 1 (496 aa).

Residues 4–99 (QREALRKIIK…ALESSEELLE (96 aa)) adopt a coiled-coil conformation. The COS domain occupies 105-162 (LQAMDSEDFPQAAKQIKDGVTMAPAFRLSLKAKVSDNMSHLMVDFAQERQMLQALKFL). Residues 164–268 (VPSAPVIDLA…EPVTLETPAF (105 aa)) form the Fibronectin type-III domain. The 210-residue stretch at 268–477 (FMFRLDASTS…VTTGLQVPSA (210 aa)) folds into the B30.2/SPRY domain. The interval 301–336 (KAREKDGKGRTASPINSPARGTPSPKRMPSGRGGRD) is disordered. 2 positions are modified to omega-N-methylarginine: Arg-310 and Arg-320.

As to quaternary structure, oligomerization is required for binding to microtubules. In terms of tissue distribution, highly expressed in brain tissues, including cerebellum, cerebral cortex, medulla, occipital pole, frontal lobe, temporal lobe and putamen. Lower expression in spinal cord.

It is found in the cytoplasm. The protein localises to the cytoskeleton. The protein resides in the microtubule organizing center. Its subcellular location is the centrosome. It localises to the nucleus. It is found in the cleavage furrow. Its function is as follows. May be involved in microtubule organization and stabilization. This chain is Fibronectin type III and SPRY domain-containing protein 1 (FSD1), found in Homo sapiens (Human).